The chain runs to 25 residues: SPbeta prophage-derived uncharacterized protein YotF (25 aa).

The protein is SPbeta prophage-derived uncharacterized protein YotF (yotF) of Bacillus subtilis (strain 168).